The sequence spans 347 residues: Quinolinate synthase (347 aa).

2 residues coordinate iminosuccinate: His47 and Ser68. A [4Fe-4S] cluster-binding site is contributed by Cys113. Residues 139 to 141 and Ser156 each bind iminosuccinate; that span reads YAN. Residue Cys200 coordinates [4Fe-4S] cluster. Residues 226–228 and Thr243 each bind iminosuccinate; that span reads HPE. Position 297 (Cys297) interacts with [4Fe-4S] cluster.

This sequence belongs to the quinolinate synthase family. Type 1 subfamily. It depends on [4Fe-4S] cluster as a cofactor.

It is found in the cytoplasm. The catalysed reaction is iminosuccinate + dihydroxyacetone phosphate = quinolinate + phosphate + 2 H2O + H(+). It functions in the pathway cofactor biosynthesis; NAD(+) biosynthesis; quinolinate from iminoaspartate: step 1/1. Functionally, catalyzes the condensation of iminoaspartate with dihydroxyacetone phosphate to form quinolinate. The polypeptide is Quinolinate synthase (Escherichia coli O157:H7).